A 142-amino-acid polypeptide reads, in one-letter code: Large ribosomal subunit protein uL11 (142 aa).

It belongs to the universal ribosomal protein uL11 family. In terms of assembly, part of the ribosomal stalk of the 50S ribosomal subunit. Interacts with L10 and the large rRNA to form the base of the stalk. L10 forms an elongated spine to which L12 dimers bind in a sequential fashion forming a multimeric L10(L12)X complex. Post-translationally, one or more lysine residues are methylated.

Forms part of the ribosomal stalk which helps the ribosome interact with GTP-bound translation factors. The chain is Large ribosomal subunit protein uL11 from Vesicomyosocius okutanii subsp. Calyptogena okutanii (strain HA).